We begin with the raw amino-acid sequence, 217 residues long: Cytokinin riboside 5'-monophosphate phosphoribohydrolase LOG7 (217 aa).

Residues Glu-79, 97–98 (RK), 114–120 (GYGTLEE), and Thr-126 contribute to the substrate site.

Belongs to the LOG family. In terms of tissue distribution, expressed in roots and shoots. Detected in the epidermis of the root elongation zone, cotyledon and leaves, in trichomes and pollen.

It is found in the cytoplasm. The protein localises to the nucleus. The enzyme catalyses N(6)-(dimethylallyl)adenosine 5'-phosphate + H2O = N(6)-dimethylallyladenine + D-ribose 5-phosphate. It catalyses the reaction 9-ribosyl-trans-zeatin 5'-phosphate + H2O = trans-zeatin + D-ribose 5-phosphate. In terms of biological role, cytokinin-activating enzyme working in the direct activation pathway. Phosphoribohydrolase that converts inactive cytokinin nucleotides to the biologically active free-base forms. In Arabidopsis thaliana (Mouse-ear cress), this protein is Cytokinin riboside 5'-monophosphate phosphoribohydrolase LOG7 (LOG7).